An 89-amino-acid polypeptide reads, in one-letter code: Small ribosomal subunit protein uS15 (89 aa).

It belongs to the universal ribosomal protein uS15 family. In terms of assembly, part of the 30S ribosomal subunit. Forms a bridge to the 50S subunit in the 70S ribosome, contacting the 23S rRNA.

One of the primary rRNA binding proteins, it binds directly to 16S rRNA where it helps nucleate assembly of the platform of the 30S subunit by binding and bridging several RNA helices of the 16S rRNA. Functionally, forms an intersubunit bridge (bridge B4) with the 23S rRNA of the 50S subunit in the ribosome. This is Small ribosomal subunit protein uS15 from Brucella abortus (strain S19).